The sequence spans 611 residues: DNA mismatch repair protein MutL (611 aa).

The protein belongs to the DNA mismatch repair MutL/HexB family.

Its function is as follows. This protein is involved in the repair of mismatches in DNA. It is required for dam-dependent methyl-directed DNA mismatch repair. May act as a 'molecular matchmaker', a protein that promotes the formation of a stable complex between two or more DNA-binding proteins in an ATP-dependent manner without itself being part of a final effector complex. The polypeptide is DNA mismatch repair protein MutL (Borreliella afzelii (strain PKo) (Borrelia afzelii)).